The following is a 136-amino-acid chain: Group 1 truncated hemoglobin GlbN (136 aa).

H81 is a binding site for heme.

Belongs to the truncated hemoglobin family. Group I subfamily. Homodimer. Heme is required as a cofactor.

In terms of biological role, binds oxygen cooperatively with very high affinity because of a fast combination and a slow dissociation rate. The chain is Group 1 truncated hemoglobin GlbN (glbN) from Mycolicibacterium paratuberculosis (strain ATCC BAA-968 / K-10) (Mycobacterium paratuberculosis).